The chain runs to 292 residues: MNNHFKCIGIVGHPRHPTALTTHEMLYRWLCAKGYEVIVEQQIAHELQLKNVKTGTLAEIGQLADLAVVVGGDGNMLGAARTLARYDIKVIGINRGNLGFLTDLDPDNAQQQLADVLEGHYISEKRFLLEAQVCQQDCQKRISTAINEVVLHPGKVAHMIEFEVYIDEIFAFSQRSDGLIISTPTGSTAYSLSAGGPILTPSLDAITLVPMFPHTLSARPLVINSSSTIRLRFSHRRNDLEISCDSQIALPIQEGEDVLIRRCDYHLNLIHPKDYSYFNTLSTKLGWSKKLF.

The active-site Proton acceptor is Asp73. Residues Asp73 to Gly74, Asn147 to Glu148, His158, Arg175, Asp177, Thr188 to Ser193, and Gln247 each bind NAD(+).

This sequence belongs to the NAD kinase family. A divalent metal cation serves as cofactor.

It localises to the cytoplasm. The catalysed reaction is NAD(+) + ATP = ADP + NADP(+) + H(+). In terms of biological role, involved in the regulation of the intracellular balance of NAD and NADP, and is a key enzyme in the biosynthesis of NADP. Catalyzes specifically the phosphorylation on 2'-hydroxyl of the adenosine moiety of NAD to yield NADP. The chain is NAD kinase from Escherichia coli (strain SMS-3-5 / SECEC).